Here is a 284-residue protein sequence, read N- to C-terminus: MTTPQFYCQYCMASLLGKKYVLKDDNPYCVSCYDRIFSNYCEECKEPIESGSKDLCYKGHHWHEGCFNCTKCNHSLVEKPFAAKDERLLCSECYSNECSSKCFHCKKTIMPGSRKMEFKGNYWHETCFVCEHCRQPIGTKPLISKESGNYCVPCFEKEFAHYCSFCKKVITSGGITFRDQPWHKECFLCSGCRKELCEEEFMSRDDYPFCLDCYNHLYAKKCAACTKPITGLRGAKFICFQDRQWHSECFNCGKCSVSLVGEGFLTHNKEIFCRKCGSGVDTDI.

The C4-type zinc-finger motif lies at 8 to 32 (CQYCMASLLGKKYVLKDDNPYCVSC). LIM zinc-binding domains are found at residues 39-100 (NYCE…ECSS), 101-160 (KCFH…KEFA), 161-220 (HYCS…LYAK), and 223-283 (AACT…VDTD).

In terms of assembly, interacts with CREM (via the third LIM domain). Interacts (via second LIM domain) with SPAG8.

The protein resides in the nucleus. In terms of biological role, may be involved in the regulation of spermatogenesis. Stimulates CREM transcriptional activity in a phosphorylation-independent manner. The polypeptide is Four and a half LIM domains protein 5 (FHL5) (Bos taurus (Bovine)).